A 301-amino-acid polypeptide reads, in one-letter code: Polyamine aminopropyltransferase (301 aa).

A PABS domain is found at 4-240; sequence WHWLLEWQTP…GLWGFVYGGV (237 aa). Gln33 contributes to the S-methyl-5'-thioadenosine binding site. 2 residues coordinate spermidine: His64 and Glu89. Residues Asp109 and 141 to 142 each bind S-methyl-5'-thioadenosine; that span reads DG. Asp159 acts as the Proton acceptor in catalysis.

Belongs to the spermidine/spermine synthase family. As to quaternary structure, homodimer or homotetramer.

Its subcellular location is the cytoplasm. It carries out the reaction S-adenosyl 3-(methylsulfanyl)propylamine + putrescine = S-methyl-5'-thioadenosine + spermidine + H(+). Its pathway is amine and polyamine biosynthesis; spermidine biosynthesis; spermidine from putrescine: step 1/1. Functionally, catalyzes the irreversible transfer of a propylamine group from the amino donor S-adenosylmethioninamine (decarboxy-AdoMet) to putrescine (1,4-diaminobutane) to yield spermidine. The protein is Polyamine aminopropyltransferase of Saccharolobus islandicus (strain Y.N.15.51 / Yellowstone #2) (Sulfolobus islandicus).